The following is a 633-amino-acid chain: Chaperone protein dnaK2 (633 aa).

Threonine 196 bears the Phosphothreonine; by autocatalysis mark. The disordered stretch occupies residues 600 to 633; that stretch reads ATADGGPAQHAATGGPTSGGGGGDDVIDAEFDKG. The segment covering 624-633 has biased composition (acidic residues); the sequence is DVIDAEFDKG.

Belongs to the heat shock protein 70 family.

Functionally, acts as a chaperone. The sequence is that of Chaperone protein dnaK2 (dnaK2) from Streptomyces avermitilis (strain ATCC 31267 / DSM 46492 / JCM 5070 / NBRC 14893 / NCIMB 12804 / NRRL 8165 / MA-4680).